A 249-amino-acid polypeptide reads, in one-letter code: Phosphoserine phosphatase (249 aa).

This sequence belongs to the HAD-like hydrolase superfamily. In terms of assembly, homodimer. The cofactor is Mg(2+). Co(2+) serves as cofactor.

The enzyme catalyses O-phospho-L-serine + H2O = L-serine + phosphate. It carries out the reaction O-phospho-D-serine + H2O = D-serine + phosphate. Its pathway is amino-acid biosynthesis; L-serine biosynthesis; L-serine from 3-phospho-D-glycerate: step 3/3. In terms of biological role, catalyzes the last step of the phosphorylated serine biosynthetic pathway, i.e. dephosphorylation of O-phospho-L-serine to form L-serine. Is also able to dephosphorylate O-phospho-D-serine with similar efficiency. Displays a poor activity on L-phosphothreonine, and cannot use L-phosphotyrosine, pyridoxal phosphate, glucose 6-phosphate, or fructose 6-phosphate as substrates. In Thermus thermophilus (strain ATCC BAA-163 / DSM 7039 / HB27), this protein is Phosphoserine phosphatase.